The sequence spans 352 residues: MKKVVVGLSGGVDSSTAAAILHNQGYEVIGLTLWLMKGKGQCCSEGMIDAAYICEQLGIPHEVVDMRDVFQTHIVDYLVTGYGAGITPLPCSQCNKTVKFGPMVQYASEKLGCDRIATGHYARIRYDEATGRYQLLRAVDRNKDQSYFLYDLSQDLLAASLFPLGEMEKADTRRIATEHGLKTADKPESQDLCLVESNGSMRAFLDKYIAPKKGDIVDTAGKVLGQHDGVHHYTIGQRKGLGIAAPEPLYVVELDAVHNKVVVGDRTKATQEECTVNRVNWVSIAEPSTPIRAAVQIRYRSAPEPVTVIPLENSRVRLVFDEPQFSITPGQAAVWYDGNKVLGGGIIEQFSK.

Residues 7–14 and L33 each bind ATP; that span reads GLSGGVDS. C94 serves as the catalytic Nucleophile. C94 and C193 are oxidised to a cystine. G119 is a binding site for ATP. Positions 143-145 are interaction with tRNA; sequence KDQ. The Cysteine persulfide intermediate role is filled by C193. The interval 298-299 is interaction with tRNA; sequence RY.

It belongs to the MnmA/TRMU family.

The protein localises to the cytoplasm. It carries out the reaction S-sulfanyl-L-cysteinyl-[protein] + uridine(34) in tRNA + AH2 + ATP = 2-thiouridine(34) in tRNA + L-cysteinyl-[protein] + A + AMP + diphosphate + H(+). In terms of biological role, catalyzes the 2-thiolation of uridine at the wobble position (U34) of tRNA, leading to the formation of s(2)U34. The protein is tRNA-specific 2-thiouridylase MnmA of Nostoc sp. (strain PCC 7120 / SAG 25.82 / UTEX 2576).